The chain runs to 844 residues: Beta-mannosidase B (844 aa).

The active-site Proton donor is the E432. An N-linked (GlcNAc...) asparagine glycan is attached at N723.

The protein belongs to the glycosyl hydrolase 2 family. Beta-mannosidase B subfamily.

It catalyses the reaction Hydrolysis of terminal, non-reducing beta-D-mannose residues in beta-D-mannosides.. It participates in glycan metabolism; N-glycan degradation. Its function is as follows. Exoglycosidase that cleaves the single beta-linked mannose residue from the non-reducing end of beta-mannosidic oligosaccharides of various complexity and length. Prefers mannobiose over mannotriose and has no activity against polymeric mannan. Is also severely restricted by galactosyl substitutions at the +1 subsite. The polypeptide is Beta-mannosidase B (mndB) (Aspergillus flavus (strain ATCC 200026 / FGSC A1120 / IAM 13836 / NRRL 3357 / JCM 12722 / SRRC 167)).